Reading from the N-terminus, the 307-residue chain is NAD kinase 1 (307 aa).

The active-site Proton acceptor is the Asp-67. NAD(+) contacts are provided by residues 67–68, 149–150, Arg-179, and Asp-181; these read DG and ND.

The protein belongs to the NAD kinase family. A divalent metal cation is required as a cofactor.

The protein localises to the cytoplasm. It carries out the reaction NAD(+) + ATP = ADP + NADP(+) + H(+). In terms of biological role, involved in the regulation of the intracellular balance of NAD and NADP, and is a key enzyme in the biosynthesis of NADP. Catalyzes specifically the phosphorylation on 2'-hydroxyl of the adenosine moiety of NAD to yield NADP. In Prochlorococcus marinus (strain SARG / CCMP1375 / SS120), this protein is NAD kinase 1.